The following is a 257-amino-acid chain: Type III pantothenate kinase (257 aa).

6–13 (DVGNTSTK) serves as a coordination point for ATP. Residue 109-112 (GADR) participates in substrate binding. Asp111 (proton acceptor) is an active-site residue. Asp132 lines the K(+) pocket. Thr135 contributes to the ATP binding site. A substrate-binding site is contributed by Thr187.

Belongs to the type III pantothenate kinase family. Homodimer. NH4(+) is required as a cofactor. Requires K(+) as cofactor.

The protein localises to the cytoplasm. It carries out the reaction (R)-pantothenate + ATP = (R)-4'-phosphopantothenate + ADP + H(+). It participates in cofactor biosynthesis; coenzyme A biosynthesis; CoA from (R)-pantothenate: step 1/5. Its function is as follows. Catalyzes the phosphorylation of pantothenate (Pan), the first step in CoA biosynthesis. This chain is Type III pantothenate kinase, found in Anaplasma marginale (strain St. Maries).